The primary structure comprises 203 residues: Holliday junction branch migration complex subunit RuvA (203 aa).

A domain I region spans residues 1 to 64 (MIGRLRGIII…EDAQLLYGFN (64 aa)). A domain II region spans residues 65 to 142 (NKQERTLFKE…KGLHGDLFTP (78 aa)). A flexible linker region spans residues 143–154 (AADLVLTSPASP). Residues 155-203 (ATDDAEQEAVAALVALGYKPQEASRMVSKIARPDTSSETLIREALRAAL) are domain III.

This sequence belongs to the RuvA family. Homotetramer. Forms an RuvA(8)-RuvB(12)-Holliday junction (HJ) complex. HJ DNA is sandwiched between 2 RuvA tetramers; dsDNA enters through RuvA and exits via RuvB. An RuvB hexamer assembles on each DNA strand where it exits the tetramer. Each RuvB hexamer is contacted by two RuvA subunits (via domain III) on 2 adjacent RuvB subunits; this complex drives branch migration. In the full resolvosome a probable DNA-RuvA(4)-RuvB(12)-RuvC(2) complex forms which resolves the HJ.

Its subcellular location is the cytoplasm. Functionally, the RuvA-RuvB-RuvC complex processes Holliday junction (HJ) DNA during genetic recombination and DNA repair, while the RuvA-RuvB complex plays an important role in the rescue of blocked DNA replication forks via replication fork reversal (RFR). RuvA specifically binds to HJ cruciform DNA, conferring on it an open structure. The RuvB hexamer acts as an ATP-dependent pump, pulling dsDNA into and through the RuvAB complex. HJ branch migration allows RuvC to scan DNA until it finds its consensus sequence, where it cleaves and resolves the cruciform DNA. This is Holliday junction branch migration complex subunit RuvA from Shigella flexneri serotype 5b (strain 8401).